A 269-amino-acid chain; its full sequence is Ribonuclease HII (269 aa).

One can recognise an RNase H type-2 domain in the interval 79-269; that stretch reads TYLAGADEVG…SFLKNILNTF (191 aa). Residues Asp85, Glu86, and Asp182 each coordinate a divalent metal cation.

The protein belongs to the RNase HII family. It depends on Mn(2+) as a cofactor. Mg(2+) is required as a cofactor.

The protein localises to the cytoplasm. The catalysed reaction is Endonucleolytic cleavage to 5'-phosphomonoester.. In terms of biological role, endonuclease that specifically degrades the RNA of RNA-DNA hybrids. This is Ribonuclease HII from Clostridium novyi (strain NT).